We begin with the raw amino-acid sequence, 273 residues long: Glutamate 5-kinase (273 aa).

Lys15 contributes to the ATP binding site. Substrate-binding residues include Ser55, Asp142, and Asn158. ATP is bound by residues 178-179 and 220-226; these read SD and TGGMLSK.

This sequence belongs to the glutamate 5-kinase family.

Its subcellular location is the cytoplasm. It catalyses the reaction L-glutamate + ATP = L-glutamyl 5-phosphate + ADP. Its pathway is amino-acid biosynthesis; L-proline biosynthesis; L-glutamate 5-semialdehyde from L-glutamate: step 1/2. In terms of biological role, catalyzes the transfer of a phosphate group to glutamate to form L-glutamate 5-phosphate. This chain is Glutamate 5-kinase, found in Streptococcus pyogenes serotype M4 (strain MGAS10750).